Reading from the N-terminus, the 371-residue chain is Queuine tRNA-ribosyltransferase (371 aa).

Residue D89 is the Proton acceptor of the active site. Substrate contacts are provided by residues 89 to 93, D143, Q185, and G212; that span reads DSGGF. The tract at residues 243–249 is RNA binding; it reads GVGKPED. D262 acts as the Nucleophile in catalysis. The RNA binding; important for wobble base 34 recognition stretch occupies residues 267-271; the sequence is TRNAR. Zn(2+)-binding residues include C300, C302, C305, and H331.

It belongs to the queuine tRNA-ribosyltransferase family. Homodimer. Within each dimer, one monomer is responsible for RNA recognition and catalysis, while the other monomer binds to the replacement base PreQ1. The cofactor is Zn(2+).

It catalyses the reaction 7-aminomethyl-7-carbaguanine + guanosine(34) in tRNA = 7-aminomethyl-7-carbaguanosine(34) in tRNA + guanine. It functions in the pathway tRNA modification; tRNA-queuosine biosynthesis. Its function is as follows. Catalyzes the base-exchange of a guanine (G) residue with the queuine precursor 7-aminomethyl-7-deazaguanine (PreQ1) at position 34 (anticodon wobble position) in tRNAs with GU(N) anticodons (tRNA-Asp, -Asn, -His and -Tyr). Catalysis occurs through a double-displacement mechanism. The nucleophile active site attacks the C1' of nucleotide 34 to detach the guanine base from the RNA, forming a covalent enzyme-RNA intermediate. The proton acceptor active site deprotonates the incoming PreQ1, allowing a nucleophilic attack on the C1' of the ribose to form the product. After dissociation, two additional enzymatic reactions on the tRNA convert PreQ1 to queuine (Q), resulting in the hypermodified nucleoside queuosine (7-(((4,5-cis-dihydroxy-2-cyclopenten-1-yl)amino)methyl)-7-deazaguanosine). The polypeptide is Queuine tRNA-ribosyltransferase (Pseudomonas syringae pv. tomato (strain ATCC BAA-871 / DC3000)).